Here is a 211-residue protein sequence, read N- to C-terminus: Redox-sensing transcriptional repressor Rex (211 aa).

The H-T-H motif DNA-binding region spans 18-57; the sequence is LYYRFLENLHASGKQRVSSSELSEAVKVDSATIRRDFSYF. 92 to 97 is an NAD(+) binding site; that stretch reads GVGNLG.

Belongs to the transcriptional regulatory Rex family. As to quaternary structure, homodimer.

The protein resides in the cytoplasm. In terms of biological role, modulates transcription in response to changes in cellular NADH/NAD(+) redox state. This chain is Redox-sensing transcriptional repressor Rex, found in Halalkalibacterium halodurans (strain ATCC BAA-125 / DSM 18197 / FERM 7344 / JCM 9153 / C-125) (Bacillus halodurans).